The following is an 80-amino-acid chain: Trefoil factor 3 (80 aa).

A signal peptide spans Met1 to Ala21. The P-type domain occupies Asn30–Leu73. 3 disulfide bridges follow: Cys32/Cys58, Cys42/Cys57, and Cys52/Cys69.

As to quaternary structure, monomer. Homodimer; disulfide-linked. As to expression, expressed in goblet cells of the intestines and colon (at protein level). Expressed by goblet cells of small and large intestinal epithelia and also by the uterus. Also expressed in the hypothalamus where it is detected in paraventricular, periventricular and supraoptic nuclei (at protein level).

The protein resides in the secreted. Its subcellular location is the extracellular space. It is found in the extracellular matrix. The protein localises to the cytoplasm. Functionally, involved in the maintenance and repair of the intestinal mucosa. Promotes the mobility of epithelial cells in healing processes (motogen). The sequence is that of Trefoil factor 3 (TFF3) from Homo sapiens (Human).